Reading from the N-terminus, the 649-residue chain is Acetyl-coenzyme A synthetase (649 aa).

CoA-binding positions include 191-194 (RGGR), threonine 312, and asparagine 336. ATP-binding positions include 388–390 (GEP), 412–417 (DTWWQT), aspartate 501, and arginine 516. Residue serine 524 coordinates CoA. Arginine 527 is an ATP binding site. Mg(2+)-binding residues include valine 538, histidine 540, and valine 543. Position 585 (arginine 585) interacts with CoA. Lysine 610 is subject to N6-acetyllysine.

It belongs to the ATP-dependent AMP-binding enzyme family. Mg(2+) serves as cofactor. Acetylated. Deacetylation by the SIR2-homolog deacetylase activates the enzyme.

The enzyme catalyses acetate + ATP + CoA = acetyl-CoA + AMP + diphosphate. In terms of biological role, catalyzes the conversion of acetate into acetyl-CoA (AcCoA), an essential intermediate at the junction of anabolic and catabolic pathways. AcsA undergoes a two-step reaction. In the first half reaction, AcsA combines acetate with ATP to form acetyl-adenylate (AcAMP) intermediate. In the second half reaction, it can then transfer the acetyl group from AcAMP to the sulfhydryl group of CoA, forming the product AcCoA. This is Acetyl-coenzyme A synthetase from Marinobacter nauticus (strain ATCC 700491 / DSM 11845 / VT8) (Marinobacter aquaeolei).